Consider the following 79-residue polypeptide: Small ribosomal subunit protein bS21A (79 aa).

The tract at residues 57-79 is disordered; sequence LARKKLQREGLLPAPKKVLRPTR.

The protein belongs to the bacterial ribosomal protein bS21 family.

This is Small ribosomal subunit protein bS21A from Rhizobium johnstonii (strain DSM 114642 / LMG 32736 / 3841) (Rhizobium leguminosarum bv. viciae).